The sequence spans 353 residues: Lactosylceramide 4-alpha-galactosyltransferase (353 aa).

At 1–22 (MSKPPDLLLRLLRGAPRQRVCT) the chain is on the cytoplasmic side. Residues 23-43 (LFIIGFKFTFFVSIMIYWHVV) form a helical; Signal-anchor for type II membrane protein membrane-spanning segment. Topologically, residues 44–353 (GEPKEKGQLY…TTHEAMKMYL (310 aa)) are lumenal. Asn-121 carries an N-linked (GlcNAc...) asparagine glycan. The DXD motif signature appears at 192-194 (DTD). Asn-203 is a glycosylation site (N-linked (GlcNAc...) asparagine).

It belongs to the glycosyltransferase 32 family. As to expression, ubiquitous. Highly expressed in kidney, heart, spleen, liver, testis and placenta.

It localises to the golgi apparatus membrane. The enzyme catalyses a beta-D-Gal-(1-&gt;4)-beta-D-Glc-(1&lt;-&gt;1)-Cer(d18:1(4E)) + UDP-alpha-D-galactose = a globoside Gb3Cer (d18:1(4E)) + UDP + H(+). The catalysed reaction is a beta-D-Gal-(1&lt;-&gt;1')-ceramide + UDP-alpha-D-galactose = alpha-D-Gal-(1-&gt;4)-beta-D-Gal-(1&lt;-&gt;1')-Cer + UDP + H(+). Its pathway is glycolipid biosynthesis. Functionally, catalyzes the transfer of galactose from UDP-alpha-D-galactose to lactosylceramide/beta-D-galactosyl-(1-&gt;4)-beta-D-glucosyl-(1&lt;-&gt;1)-ceramide(d18:1(4E)) to produce globotriaosylceramide/globoside Gb3Cer (d18:1(4E)). Also able to transfer galactose to galactosylceramide/beta-D-Gal-(1&lt;-&gt;1')-Cer. Globoside Gb3Cer is a glycosphingolipid of the globo serie, one of the major types of neutral root structures of glycosphingolipids, that constitute a significant portion of mammalian cell membranes. Globotriaosylceramide/globoside Gb3Cer in blood and tissue cell membranes is the antigen Pk of blood histogroup P. (Microbial infection) Globotriaosylceramide is one of the cellular ligands for bacterial verotoxins. The polypeptide is Lactosylceramide 4-alpha-galactosyltransferase (A4GALT) (Homo sapiens (Human)).